A 76-amino-acid chain; its full sequence is U7-lycotoxin-Ls1c (76 aa).

A signal peptide spans 1 to 22 (MKLIIFTGLALFLLVSLIDVEA). Positions 23–26 (QNEG) are excised as a propeptide.

This sequence belongs to the neurotoxin 19 (CSTX) family. 07 (U7-Lctx) subfamily. Post-translationally, contains 4 disulfide bonds. Expressed by the venom gland.

The protein localises to the secreted. In Lycosa singoriensis (Wolf spider), this protein is U7-lycotoxin-Ls1c.